The following is a 93-amino-acid chain: UPF0298 protein GWCH70_0997 (93 aa).

The protein belongs to the UPF0298 family.

It is found in the cytoplasm. The protein is UPF0298 protein GWCH70_0997 of Geobacillus sp. (strain WCH70).